Reading from the N-terminus, the 431-residue chain is Enolase (431 aa).

Q162 is a binding site for (2R)-2-phosphoglycerate. The active-site Proton donor is E204. Mg(2+) is bound by residues D241, E288, and D315. Positions 340, 369, 370, and 391 each coordinate (2R)-2-phosphoglycerate. Residue K340 is the Proton acceptor of the active site.

The protein belongs to the enolase family. It depends on Mg(2+) as a cofactor.

It localises to the cytoplasm. The protein resides in the secreted. Its subcellular location is the cell surface. It catalyses the reaction (2R)-2-phosphoglycerate = phosphoenolpyruvate + H2O. It participates in carbohydrate degradation; glycolysis; pyruvate from D-glyceraldehyde 3-phosphate: step 4/5. Catalyzes the reversible conversion of 2-phosphoglycerate (2-PG) into phosphoenolpyruvate (PEP). It is essential for the degradation of carbohydrates via glycolysis. This is Enolase from Phocaeicola vulgatus (strain ATCC 8482 / DSM 1447 / JCM 5826 / CCUG 4940 / NBRC 14291 / NCTC 11154) (Bacteroides vulgatus).